We begin with the raw amino-acid sequence, 305 residues long: Superkiller complex protein 8 (305 aa).

Met-1 bears the N-acetylmethionine mark. Thr-2 is subject to N-acetylthreonine; in WD repeat-containing protein 61, N-terminally processed. WD repeat units lie at residues 14 to 57 (AHDD…LDLQ), 62 to 101 (GHQL…QIKS), 104 to 143 (AGPV…KEYS), 146 to 187 (TRGK…HTLE), 188 to 227 (GHAM…LAGT), 230 to 269 (GHAS…CVHT), and 272 to 305 (DHQD…DCPI).

This sequence belongs to the SKI8 family. Component of the PAF1 complex, which consists of CDC73, PAF1, LEO1, CTR9, RTF1 and SKIC8. The PAF1 complex interacts with PHF5A. Within the PAF1 complex interacts directly with PHF5A. Component of the SKI complex which consists of SKIC2, SKIC3 and SKIC8.

It localises to the nucleus. It is found in the cytoplasm. In terms of biological role, component of the PAF1 complex (PAF1C) which has multiple functions during transcription by RNA polymerase II and is implicated in regulation of development and maintenance of embryonic stem cell pluripotency. PAF1C associates with RNA polymerase II through interaction with POLR2A CTD non-phosphorylated and 'Ser-2'- and 'Ser-5'-phosphorylated forms and is involved in transcriptional elongation, acting both independently and synergistically with TCEA1 and in cooperation with the DSIF complex and HTATSF1. PAF1C is required for transcription of Hox and Wnt target genes. PAF1C is involved in hematopoiesis and stimulates transcriptional activity of KMT2A/MLL1; it promotes leukemogenesis through association with KMT2A/MLL1-rearranged oncoproteins, such as KMT2A/MLL1-MLLT3/AF9 and KMT2A/MLL1-MLLT1/ENL. PAF1C is involved in histone modifications such as ubiquitination of histone H2B and methylation on histone H3 'Lys-4' (H3K4me3). PAF1C recruits the RNF20/40 E3 ubiquitin-protein ligase complex and the E2 enzyme UBE2A or UBE2B to chromatin which mediate monoubiquitination of 'Lys-120' of histone H2B (H2BK120ub1); UB2A/B-mediated H2B ubiquitination is proposed to be coupled to transcription. PAF1C is involved in mRNA 3' end formation probably through association with cleavage and poly(A) factors. In case of infection by influenza A strain H3N2, PAF1C associates with viral NS1 protein, thereby regulating gene transcription. Required for mono- and trimethylation on histone H3 'Lys-4' (H3K4me3), dimethylation on histone H3 'Lys-79' (H3K4me3). Required for Hox gene transcription. Also acts as a component of the SKI complex, a multiprotein complex that assists the RNA-degrading exosome during the mRNA decay and quality-control pathways. The SKI complex catalyzes mRNA extraction from 80S ribosomal complexes in the 3'-5' direction and channels mRNA to the cytosolic exosome for degradation. SKI-mediated extraction of mRNA from stalled ribosomes allow binding of the Pelota-HBS1L complex and subsequent ribosome disassembly by ABCE1 for ribosome recycling. In Homo sapiens (Human), this protein is Superkiller complex protein 8.